The following is a 437-amino-acid chain: Oxysterol-binding protein homolog 7 (437 aa).

Positions 23–32 (IASNAANSKP) are enriched in polar residues. A disordered region spans residues 23–42 (IASNAANSKPSGADTDDIDE). The segment at 54–393 (IISQLKPGCD…EDLDYYIYKH (340 aa)) is OSBP-related domain (ORD). Residues 64 to 69 (LSRITL), 126 to 129 (KPLN), and 157 to 158 (HH) each bind a 1,2-diacyl-sn-glycero-3-phospho-(1D-myo-inositol 4-phosphate). A 1,2-diacyl-sn-glycero-3-phospho-L-serine-binding positions include 64–69 (LSRITL) and Asn129. Residue Ser183 participates in a 1,2-diacyl-sn-glycero-3-phospho-L-serine binding. A Glycyl lysine isopeptide (Lys-Gly) (interchain with G-Cter in ubiquitin) cross-link involves residue Lys276. 3 residues coordinate a 1,2-diacyl-sn-glycero-3-phospho-(1D-myo-inositol 4-phosphate): Lys351, Glu355, and Arg359.

It belongs to the OSBP family. As to quaternary structure, interacts with the AAA ATPase VPS4; regulates OSH7 membrane association. VPS4 is required for membrane dissociation of OSH7.

It localises to the cytoplasm. The protein resides in the cell membrane. It is found in the endoplasmic reticulum membrane. It catalyses the reaction a 1,2-diacyl-sn-glycero-3-phospho-L-serine(in) = a 1,2-diacyl-sn-glycero-3-phospho-L-serine(out). Functionally, ipid transport protein (LTP) involved in non-vesicular transfer of lipids between membranes. Functions in phosphoinositide-coupled directional transport of various lipids by carrying the lipid molecule in a hydrophobic pocket and transferring it between membranes through the cytosol. Involved in maintenance of intracellular sterol distribution and homeostasis. Involved in lipid countertransport between the endoplasmic reticulum and the plasma membrane. Specifically exchanges phosphatidylserine with phosphatidylinositol 4-phosphate (PI4P), delivering phosphatidylserine to the PM in exchange for PI4P, which is delivered to the ER-localized PI4P phosphatase SAC1 for degradation. Thus, by maintaining a PI4P gradient at the ER/PM interface, SAC1 drives PS transport. Binds phosphatidylserine and PI4P in a mutually exclusive manner. The protein is Oxysterol-binding protein homolog 7 of Saccharomyces cerevisiae (strain ATCC 204508 / S288c) (Baker's yeast).